The chain runs to 196 residues: Putative NADH dehydrogenase/NAD(P)H nitroreductase PST_3601 (196 aa).

The protein belongs to the nitroreductase family. HadB/RutE subfamily. Requires FMN as cofactor.

The protein is Putative NADH dehydrogenase/NAD(P)H nitroreductase PST_3601 of Stutzerimonas stutzeri (strain A1501) (Pseudomonas stutzeri).